A 302-amino-acid chain; its full sequence is Sulfate adenylyltransferase subunit 2 (302 aa).

The protein belongs to the PAPS reductase family. CysD subfamily. Heterodimer composed of CysD, the smaller subunit, and CysN.

The catalysed reaction is sulfate + ATP + H(+) = adenosine 5'-phosphosulfate + diphosphate. It participates in sulfur metabolism; hydrogen sulfide biosynthesis; sulfite from sulfate: step 1/3. In terms of biological role, with CysN forms the ATP sulfurylase (ATPS) that catalyzes the adenylation of sulfate producing adenosine 5'-phosphosulfate (APS) and diphosphate, the first enzymatic step in sulfur assimilation pathway. APS synthesis involves the formation of a high-energy phosphoric-sulfuric acid anhydride bond driven by GTP hydrolysis by CysN coupled to ATP hydrolysis by CysD. The protein is Sulfate adenylyltransferase subunit 2 of Shigella boydii serotype 4 (strain Sb227).